A 486-amino-acid polypeptide reads, in one-letter code: Scarecrow-like protein 15 (486 aa).

The interval 1-28 (MKIPASSPQDTTNNNNNTNSTDSNHLSM) is disordered. Positions 10–24 (DTTNNNNNTNSTDSN) are enriched in low complexity. The 373-residue stretch at 113–485 (DSVDNGGFDF…RALVATSAWR (373 aa)) folds into the GRAS domain. A leucine repeat I (LRI) region spans residues 120-179 (FDFIEDLIRVVDCVESDELQLAQVVLSRLNQRLRSPAGRPLQRAAFYFKEALGSFLTGSN). Residues 198 to 266 (IKEYSGISPI…VSGGFLRVTA (69 aa)) form a VHIID region. The short motif at 232-236 (VHVVD) is the VHIID element. Positions 278–310 (LVKENLTQFAAEMKIRFQIEFVLMKTFEMLSFK) are leucine repeat II (LRII). Residues 320-410 (TVVLISPAIF…AFVLRPKISA (91 aa)) are PFYRE. The SAW stretch occupies residues 413 to 485 (ETAADRRHTG…RALVATSAWR (73 aa)).

It belongs to the GRAS family. In terms of tissue distribution, expressed in seedlings, roots, leaves and flowers.

The protein localises to the nucleus. Functionally, probable transcription factor involved in plant development. The chain is Scarecrow-like protein 15 (SCL15) from Arabidopsis thaliana (Mouse-ear cress).